We begin with the raw amino-acid sequence, 109 residues long: UPF0122 protein BH2485 (109 aa).

Belongs to the UPF0122 family.

Might take part in the signal recognition particle (SRP) pathway. This is inferred from the conservation of its genetic proximity to ftsY/ffh. May be a regulatory protein. This chain is UPF0122 protein BH2485, found in Halalkalibacterium halodurans (strain ATCC BAA-125 / DSM 18197 / FERM 7344 / JCM 9153 / C-125) (Bacillus halodurans).